Reading from the N-terminus, the 264-residue chain is tRNA pseudouridine synthase A (264 aa).

D51 serves as the catalytic Nucleophile. Y109 provides a ligand contact to substrate.

The protein belongs to the tRNA pseudouridine synthase TruA family. Homodimer.

The catalysed reaction is uridine(38/39/40) in tRNA = pseudouridine(38/39/40) in tRNA. Its function is as follows. Formation of pseudouridine at positions 38, 39 and 40 in the anticodon stem and loop of transfer RNAs. This is tRNA pseudouridine synthase A from Yersinia pseudotuberculosis serotype O:1b (strain IP 31758).